The following is a 291-amino-acid chain: uncharacterized protein (291 aa).

The tract at residues 1–55 is disordered; that stretch reads MRTHDIPRSPLVGHKKNAAPDGIGASRACCPARENEPFKKGSTNSRGGGVEWSRS. 2 helical membrane-spanning segments follow: residues 74–96 and 188–210; these read WWAVGPVLGICAGVWGAAHPVHA and YYYLAIPVALTAGYTVAFWRIRL.

The protein to T.pallidum TP_0733.

Its subcellular location is the cell membrane. This is an uncharacterized protein from Treponema pallidum (strain Nichols).